The following is a 159-amino-acid chain: Ribosomal RNA large subunit methyltransferase H (159 aa).

Residues L76, G108, and 127–132 (FSKMTF) contribute to the S-adenosyl-L-methionine site.

The protein belongs to the RNA methyltransferase RlmH family. In terms of assembly, homodimer.

The protein resides in the cytoplasm. It carries out the reaction pseudouridine(1915) in 23S rRNA + S-adenosyl-L-methionine = N(3)-methylpseudouridine(1915) in 23S rRNA + S-adenosyl-L-homocysteine + H(+). Functionally, specifically methylates the pseudouridine at position 1915 (m3Psi1915) in 23S rRNA. The protein is Ribosomal RNA large subunit methyltransferase H of Lachnoclostridium phytofermentans (strain ATCC 700394 / DSM 18823 / ISDg) (Clostridium phytofermentans).